The sequence spans 320 residues: Stress-induced-phosphoprotein 1 (320 aa).

6 TPR repeats span residues 5–38 (AIAE…DPSN), 40–72 (TFYN…GRET), 80–113 (AKAM…FRDP), 140–173 (AQEE…DPEN), 175–207 (ILYS…DSKF), and 208–241 (IKGY…DPSN). A disordered region spans residues 241 to 269 (NEEAREGVRNCLRSNDEDPEKAKERSLAD). The segment covering 242–269 (EEAREGVRNCLRSNDEDPEKAKERSLAD) has biased composition (basic and acidic residues). The STI1 domain occupies 269–308 (DPEVQEILRDPGMRMILEQMSNDPGAVREHLKNPEIFQKL).

Forms a complex with hsp-1/hsp70 and daf-21/hsp90. Interacts with daf-21/hsp90 (via the C-terminal MEEVD pentapeptide). In terms of tissue distribution, expressed ubiquitously in the whole body. Detected predominantly in the pharyngeal muscles, vulva epithelial cells, striated body-wall muscles, spermathecae and intestinal cell ring. Also observed in the tail regions of hermaphrodite and in the sensory rays and spicules of males.

The protein resides in the cytoplasm. In terms of biological role, plays a role in gonad development. Up-regulates longevity and thermotolerance. Binds daf-21/hsp90 and inhibits its ATPase activity. The protein is Stress-induced-phosphoprotein 1 of Caenorhabditis elegans.